Here is a 345-residue protein sequence, read N- to C-terminus: Phosphoribosylformylglycinamidine cyclo-ligase (345 aa).

This sequence belongs to the AIR synthase family.

It is found in the cytoplasm. It carries out the reaction 2-formamido-N(1)-(5-O-phospho-beta-D-ribosyl)acetamidine + ATP = 5-amino-1-(5-phospho-beta-D-ribosyl)imidazole + ADP + phosphate + H(+). It participates in purine metabolism; IMP biosynthesis via de novo pathway; 5-amino-1-(5-phospho-D-ribosyl)imidazole from N(2)-formyl-N(1)-(5-phospho-D-ribosyl)glycinamide: step 2/2. This Cronobacter sakazakii (strain ATCC BAA-894) (Enterobacter sakazakii) protein is Phosphoribosylformylglycinamidine cyclo-ligase.